A 780-amino-acid chain; its full sequence is Striatin (780 aa).

Residues 53–120 (LHFLQHEWAR…QERAKYHKLK (68 aa)) adopt a coiled-coil conformation. The caveolin-binding stretch occupies residues 55–63 (FLQHEWARF). The interval 124 to 150 (ELNQGDMKPPSYDSDEGNETEVQPQQN) is disordered. At Ser137 the chain carries Phosphoserine. Residues 149 to 166 (QNSQLMWKQGRQLLRQYL) form a calmodulin-binding region. Phosphothreonine is present on Thr225. Residues Ser227, Ser229, Ser245, and Ser259 each carry the phosphoserine modification. 2 disordered regions span residues 289–310 (DFLVTSEEGDNESRSAGDGTDW) and 365–387 (DELPSLQPSVGSPSRPSSSRLPE). Positions 299–310 (NESRSAGDGTDW) are enriched in basic and acidic residues. WD repeat units follow at residues 461–500 (SHFDGIRALAFHPIEPVLITASEDHTLKMWNLQKTAPAKK), 514–553 (AHKGPVLCVVMSSNGEQCYSGGTDGLIQGWNTTNPNIDPY), 567–606 (GHTDAVWGLAYSAAHQRLLSCSADGTLRLWNTTEVAPALS), 662–701 (NSSCQINRVISHPTLPISITAHEDRHIKFYDNNTGKLIHS), 704–743 (AHLEAVTSLAVDPNGLYLMSGSHDCSIRLWNLESKTCIQE), and 750–780 (KFEESIHDVAFHPSKCYIASAGADALAKVFV).

The protein belongs to the WD repeat striatin family. In terms of assembly, part of the core of STRIPAK complexes composed of PP2A catalytic and scaffolding subunits, the striatins (PP2A regulatory subunits), the striatin-associated proteins MOB4, STRIP1 and STRIP2, PDCD10 and members of the STE20 kinases, such as STK24 and STK26. Interacts with CTTNBP2; this interaction may regulate dendritic spine distribution of STRN. Activation of glutamate receptors weakens the interaction with CTTNBP2. In terms of tissue distribution, preferentially expressed in brain.

The protein resides in the cytoplasm. It localises to the membrane. Its subcellular location is the cell projection. It is found in the dendritic spine. Its function is as follows. Calmodulin-binding scaffolding protein which is the center of the striatin-interacting phosphatase and kinase (STRIPAK) complexes. STRIPAK complexes have critical roles in protein (de)phosphorylation and are regulators of multiple signaling pathways including Hippo, MAPK, nuclear receptor and cytoskeleton remodeling. Different types of STRIPAK complexes are involved in a variety of biological processes such as cell growth, differentiation, apoptosis, metabolism and immune regulation. This is Striatin (STRN) from Homo sapiens (Human).